A 214-amino-acid polypeptide reads, in one-letter code: Outer-membrane lipoprotein LolB (214 aa).

A signal peptide spans 1–25 (MNNLKRLTKTIFSCFTLSALLLLAG). Residue cysteine 26 is the site of N-palmitoyl cysteine attachment. Cysteine 26 carries the S-diacylglycerol cysteine lipid modification. The segment covering 143–160 (QVIESDSQGKPKQLTNTQ) has biased composition (polar residues). Positions 143–163 (QVIESDSQGKPKQLTNTQTPP) are disordered.

It belongs to the LolB family. Monomer.

It localises to the cell outer membrane. In terms of biological role, plays a critical role in the incorporation of lipoproteins in the outer membrane after they are released by the LolA protein. The chain is Outer-membrane lipoprotein LolB from Shewanella baltica (strain OS223).